A 442-amino-acid chain; its full sequence is MSKTYHFIGIKGSGMSALALMLHQMGHMVQGSDVEKYYFTQRGLEQAGITILPFSEDNITPDMELIVGNAFRENNKEVAYALRHQIPFKRYHDFLGDFMKSFISFAVAGAHGKTSTTGLLSHVLKNITDTSYLIGDGTGRGSANAQYFVFESDEYERHFMPYHPEYSIITNIDFDHPDYFTGIADVRNAFNDYAKQVKKALFVYGEDDELKKIEAPAPIYYYGFEEGNDFIAYDITRTTNGSDFKVKHQGEVIGQFHVPAYGKHNILNATAVIANLFVAGIDMALVADHLKTFSGVKRRFTEKIINDTIIIDDFAHHPTEIVATIDAARQKYPSKEIVAIFQPHTFTRTIALLEDFACALNEADSVYLAQIYGSAREVDKGEVKVEDLAAKIIKPSQVVTVENVSPLLDHDNAVYVFMGAGDIQLYEHSFEELLANLTKNNQ.

An ATP-binding site is contributed by Gly109–Ser115.

Belongs to the MurCDEF family.

The protein localises to the cytoplasm. The catalysed reaction is UDP-N-acetyl-alpha-D-muramate + L-alanine + ATP = UDP-N-acetyl-alpha-D-muramoyl-L-alanine + ADP + phosphate + H(+). Its pathway is cell wall biogenesis; peptidoglycan biosynthesis. Functionally, cell wall formation. The protein is UDP-N-acetylmuramate--L-alanine ligase of Streptococcus pyogenes serotype M6 (strain ATCC BAA-946 / MGAS10394).